The sequence spans 355 residues: UDP-N-acetylglucosamine--N-acetylmuramyl-(pentapeptide) pyrophosphoryl-undecaprenol N-acetylglucosamine transferase (355 aa).

Residues 13-15 (TGG), Asn125, Arg162, Ser190, Ile244, and Gln289 each bind UDP-N-acetyl-alpha-D-glucosamine.

This sequence belongs to the glycosyltransferase 28 family. MurG subfamily.

The protein resides in the cell inner membrane. It carries out the reaction di-trans,octa-cis-undecaprenyl diphospho-N-acetyl-alpha-D-muramoyl-L-alanyl-D-glutamyl-meso-2,6-diaminopimeloyl-D-alanyl-D-alanine + UDP-N-acetyl-alpha-D-glucosamine = di-trans,octa-cis-undecaprenyl diphospho-[N-acetyl-alpha-D-glucosaminyl-(1-&gt;4)]-N-acetyl-alpha-D-muramoyl-L-alanyl-D-glutamyl-meso-2,6-diaminopimeloyl-D-alanyl-D-alanine + UDP + H(+). Its pathway is cell wall biogenesis; peptidoglycan biosynthesis. Its function is as follows. Cell wall formation. Catalyzes the transfer of a GlcNAc subunit on undecaprenyl-pyrophosphoryl-MurNAc-pentapeptide (lipid intermediate I) to form undecaprenyl-pyrophosphoryl-MurNAc-(pentapeptide)GlcNAc (lipid intermediate II). The sequence is that of UDP-N-acetylglucosamine--N-acetylmuramyl-(pentapeptide) pyrophosphoryl-undecaprenol N-acetylglucosamine transferase from Neisseria meningitidis serogroup C (strain 053442).